A 411-amino-acid chain; its full sequence is LL-diaminopimelate aminotransferase (411 aa).

The substrate site is built by Tyr15 and Gly42. Residues Tyr72, 108 to 109, Tyr132, Asn187, Tyr218, and 246 to 248 each bind pyridoxal 5'-phosphate; these read SK and SFS. Residues Lys109, Tyr132, and Asn187 each contribute to the substrate site. Lys249 is subject to N6-(pyridoxal phosphate)lysine. Pyridoxal 5'-phosphate is bound by residues Arg257 and Asn292. Residues Asn292 and Arg388 each coordinate substrate.

Belongs to the class-I pyridoxal-phosphate-dependent aminotransferase family. LL-diaminopimelate aminotransferase subfamily. As to quaternary structure, homodimer. The cofactor is pyridoxal 5'-phosphate.

It catalyses the reaction (2S,6S)-2,6-diaminopimelate + 2-oxoglutarate = (S)-2,3,4,5-tetrahydrodipicolinate + L-glutamate + H2O + H(+). It functions in the pathway amino-acid biosynthesis; L-lysine biosynthesis via DAP pathway; LL-2,6-diaminopimelate from (S)-tetrahydrodipicolinate (aminotransferase route): step 1/1. Functionally, involved in the synthesis of meso-diaminopimelate (m-DAP or DL-DAP), required for both lysine and peptidoglycan biosynthesis. Catalyzes the direct conversion of tetrahydrodipicolinate to LL-diaminopimelate. In Synechococcus sp. (strain JA-3-3Ab) (Cyanobacteria bacterium Yellowstone A-Prime), this protein is LL-diaminopimelate aminotransferase.